The chain runs to 1249 residues: Clustered mitochondria protein homolog (1249 aa).

The interval 1–34 (MAQTNGELEHSKAETPEQLTNGNHPEETQEEEQN) is disordered. Residues 321–565 (DITRSQENYL…RVTPLDVMWQ (245 aa)) enclose the Clu domain. Disordered regions lie at residues 610 to 638 (VETA…EALD) and 874 to 907 (VPAT…PEKP). Residues 613–638 (ASKEKSEENAESKEEGSEEKSEEALD) are compositionally biased toward basic and acidic residues. TPR repeat units lie at residues 975-1008 (AKLY…TERT), 1017-1050 (ILSY…WKII), and 1059-1092 (ITTM…CESL). A compositionally biased stretch (polar residues) spans 1178 to 1191 (TRTLGTKVQPQVGQ). A disordered region spans residues 1178 to 1249 (TRTLGTKVQP…KLRGSKKSSA (72 aa)). The span at 1192–1205 (SAPSASGASSANPS) shows a compositional bias: low complexity.

The protein belongs to the CLU family. May associate with the eukaryotic translation initiation factor 3 (eIF-3) complex.

The protein resides in the cytoplasm. In terms of biological role, mRNA-binding protein involved in proper cytoplasmic distribution of mitochondria. In Aspergillus oryzae (strain ATCC 42149 / RIB 40) (Yellow koji mold), this protein is Clustered mitochondria protein homolog.